The primary structure comprises 96 residues: Bublin coiled-coil protein (96 aa).

Residues 39-79 (NSCLDDIEDRNDALNGKLHELLESNRQARKDFRQQLNDEEA) are a coiled coil. The interval 63-96 (NRQARKDFRQQLNDEEASPPPAEDPASRDTQTED) is disordered. A compositionally biased stretch (basic and acidic residues) spans 87–96 (PASRDTQTED).

Belongs to the UPF0184 (EST00098) family.

Its subcellular location is the cell junction. The protein resides in the cytoplasm. It localises to the cytoskeleton. In terms of biological role, essential for intermediate filament organization in intestinal cells, interacts with intermediate filament and regulates intestinal lumen morphology. This is Bublin coiled-coil protein (bbln) from Ctenopharyngodon idella (Grass carp).